Consider the following 240-residue polypeptide: Sugar fermentation stimulation protein homolog (240 aa).

The protein belongs to the SfsA family.

This is Sugar fermentation stimulation protein homolog from Crocosphaera subtropica (strain ATCC 51142 / BH68) (Cyanothece sp. (strain ATCC 51142)).